Reading from the N-terminus, the 2222-residue chain is Protein SWEETIE (2222 aa).

10 HEAT repeats span residues 37–75, 228–265, 331–368, 510–540, 541–578, 611–648, 768–807, 898–936, 968–1008, and 1029–1066; these read LLCFEILSDLISAIDEEPKESLLVTQRKCEDALYSLVTL, SEFDTLASYCVKGIEDSESSVRDAFAEALGSLLALGMH, SELQDYSLPIMDMLRGDSSIDAHALACVLYILRVGVID, PARLPRSVLEVSKKMLTESRRNVTVASSEKE, AGWLLLSSLLNSMPKEEFGDQDFDILILWTDVFAGNPE, CNDGILLQPVLANLRSALSCVSTMANKRFSDVKTLVDI, QGMLSLLSVIQQCLKAGKKQQWRTASLTNICAGLLAGLKA, MALSSLVPATVNSVSSLTKTSVLGLKIWALHGLLLTIEA, QGIG…WQEI, and VSVHIHVKNLLMTLASRQPIIRRLSVSTLRHLVEKDPV. The segment at 1133 to 1165 is disordered; that stretch reads IAENDPAYTRENLGDDDEDMVSSSSGKSIRANP. HEAT repeat units lie at residues 1238-1269, 1270-1306, 1312-1354, 1372-1410, 1434-1474, 1550-1586, 1783-1820, 1836-1874, 1880-1917, and 1966-2006; these read MRPIGVGLLSTILEKFKLVADPELPGHLLLEQ, YQAQLLSAVRTALDANSGPVLLEAGLQLATKIMTSGI, VAVK…AHAS, VEFEALLPMFSKSSDLLGRYWIQVLKGYSYICLCQNLKK, EAWP…LEAE, DLCQELLQVLSYSFHMDSSWDILAVSVVQQISQNCPK, VMLKSCQISIAAVVKDSNVQVQATVLQVLKSLVQRYNN, GDIVSLMQRALLKPVNTESVVIAGECLRFIMLLQTHSIT, GFMSLFLEVVLVVFSKTSDGVSQEVLELRNVAVRLVSH, and AMDI…QVST. The tract at residues 1992–2203 is disordered; that stretch reads EALSTMPTSF…DESSKEHVGA (212 aa). Residues 1996–2009 show a composition bias toward polar residues; that stretch reads TMPTSFNQVSTVES. A compositionally biased stretch (acidic residues) spans 2010 to 2027; that stretch reads GTDEEEEEEEDDDDDDWD. Polar residues predominate over residues 2028 to 2040; sequence TFQSFPASTNLEG. Positions 2062-2072 are enriched in acidic residues; sequence QDDESNAEETD. Composition is skewed to basic and acidic residues over residues 2073-2096 and 2108-2124; these read DQHLASDHATDITREDSNDKSKEV and TREDSVDKSKEVEEETV. The span at 2150–2164 shows a compositional bias: polar residues; the sequence is NEQSVESKNLESENI. Residues 2191 to 2202 are compositionally biased toward basic and acidic residues; sequence SPEDESSKEHVG.

The protein belongs to the HEATR5 family.

May regulate multiple metabolic, hormonal and stress-related pathways. Required for carbohydrate metabolism and homoeostasis. May also monitor ethylene biosynthesis and senescence. This chain is Protein SWEETIE, found in Arabidopsis thaliana (Mouse-ear cress).